The primary structure comprises 253 residues: Ribonuclease HII (253 aa).

In terms of domain architecture, RNase H type-2 spans 30-221 (GPVAGVDEVG…VRRLVVDGEP (192 aa)). 3 residues coordinate a divalent metal cation: D36, E37, and D130.

It belongs to the RNase HII family. Requires Mn(2+) as cofactor. Mg(2+) serves as cofactor.

The protein resides in the cytoplasm. It carries out the reaction Endonucleolytic cleavage to 5'-phosphomonoester.. Endonuclease that specifically degrades the RNA of RNA-DNA hybrids. The protein is Ribonuclease HII of Mycolicibacterium gilvum (strain PYR-GCK) (Mycobacterium gilvum (strain PYR-GCK)).